The chain runs to 1324 residues: Coiled-coil domain-containing protein 171 (1324 aa).

5 coiled-coil regions span residues 29–296 (KNET…RAAH), 325–393 (AEAV…RLQY), 453–521 (FSVV…KCAD), 599–712 (SELC…VREN), and 981–1145 (FTQR…KECV). Residues 1301 to 1312 (PHSLSSQSSPGV) are compositionally biased toward polar residues. Residues 1301 to 1324 (PHSLSSQSSPGVPTNAKRPSQIGL) are disordered.

The protein is Coiled-coil domain-containing protein 171 (Ccdc171) of Mus musculus (Mouse).